The following is a 124-amino-acid chain: Small ribosomal subunit protein uS12c (124 aa).

Disordered stretches follow at residues 1 to 28 (MPTI…KGCP) and 104 to 124 (ASGV…QPKT). Basic residues-rich tracts occupy residues 11 to 20 (ERHKSSKKTK) and 109 to 124 (DRKK…QPKT).

This sequence belongs to the universal ribosomal protein uS12 family. Part of the 30S ribosomal subunit.

Its subcellular location is the plastid. It is found in the chloroplast. Its function is as follows. With S4 and S5 plays an important role in translational accuracy. Located at the interface of the 30S and 50S subunits. The protein is Small ribosomal subunit protein uS12c (rps12) of Gracilaria tenuistipitata var. liui (Red alga).